The sequence spans 198 residues: Ribonuclease HII (198 aa).

The RNase H type-2 domain occupies 3-194 (RRVCGVDEAG…VKRCLALGQQ (192 aa)). 3 residues coordinate a divalent metal cation: Asp9, Glu10, and Asp101.

The protein belongs to the RNase HII family. Mn(2+) serves as cofactor. Requires Mg(2+) as cofactor.

The protein localises to the cytoplasm. The catalysed reaction is Endonucleolytic cleavage to 5'-phosphomonoester.. In terms of biological role, endonuclease that specifically degrades the RNA of RNA-DNA hybrids. The protein is Ribonuclease HII of Laribacter hongkongensis (strain HLHK9).